We begin with the raw amino-acid sequence, 286 residues long: Light-independent protochlorophyllide reductase iron-sulfur ATP-binding protein (286 aa).

ATP contacts are provided by residues 10–15 and Lys39; that span reads GIGKST. Residue Ser14 participates in Mg(2+) binding. [4Fe-4S] cluster-binding residues include Cys95 and Cys129. 180 to 181 is an ATP binding site; the sequence is NR.

The protein belongs to the NifH/BchL/ChlL family. In terms of assembly, homodimer. Protochlorophyllide reductase is composed of three subunits; ChlL, ChlN and ChlB. [4Fe-4S] cluster serves as cofactor.

The catalysed reaction is chlorophyllide a + oxidized 2[4Fe-4S]-[ferredoxin] + 2 ADP + 2 phosphate = protochlorophyllide a + reduced 2[4Fe-4S]-[ferredoxin] + 2 ATP + 2 H2O. It participates in porphyrin-containing compound metabolism; chlorophyll biosynthesis (light-independent). Its function is as follows. Component of the dark-operative protochlorophyllide reductase (DPOR) that uses Mg-ATP and reduced ferredoxin to reduce ring D of protochlorophyllide (Pchlide) to form chlorophyllide a (Chlide). This reaction is light-independent. The L component serves as a unique electron donor to the NB-component of the complex, and binds Mg-ATP. This is Light-independent protochlorophyllide reductase iron-sulfur ATP-binding protein from Synechococcus elongatus (strain ATCC 33912 / PCC 7942 / FACHB-805) (Anacystis nidulans R2).